The following is a 417-amino-acid chain: UDP-N-acetylglucosamine 1-carboxyvinyltransferase (417 aa).

Lys22–Asn23 is a phosphoenolpyruvate binding site. Arg93 serves as a coordination point for UDP-N-acetyl-alpha-D-glucosamine. Residue Cys117 is the Proton donor of the active site. Position 117 is a 2-(S-cysteinyl)pyruvic acid O-phosphothioketal (Cys117). UDP-N-acetyl-alpha-D-glucosamine is bound by residues Arg122–Gln126, Asp305, and Ile327.

The protein belongs to the EPSP synthase family. MurA subfamily.

The protein localises to the cytoplasm. The catalysed reaction is phosphoenolpyruvate + UDP-N-acetyl-alpha-D-glucosamine = UDP-N-acetyl-3-O-(1-carboxyvinyl)-alpha-D-glucosamine + phosphate. It functions in the pathway cell wall biogenesis; peptidoglycan biosynthesis. Cell wall formation. Adds enolpyruvyl to UDP-N-acetylglucosamine. This Dechloromonas aromatica (strain RCB) protein is UDP-N-acetylglucosamine 1-carboxyvinyltransferase.